The following is a 177-amino-acid chain: Bifunctional protein PyrR (177 aa).

The short motif at 99–111 (VILVDDVIYKGRT) is the PRPP-binding element.

Belongs to the purine/pyrimidine phosphoribosyltransferase family. PyrR subfamily.

It catalyses the reaction UMP + diphosphate = 5-phospho-alpha-D-ribose 1-diphosphate + uracil. In terms of biological role, regulates the transcription of the pyrimidine nucleotide (pyr) operon in response to exogenous pyrimidines. Also displays a weak uracil phosphoribosyltransferase activity which is not physiologically significant. The polypeptide is Bifunctional protein PyrR (Microcystis aeruginosa (strain NIES-843 / IAM M-2473)).